Consider the following 426-residue polypeptide: Histidine--tRNA ligase (426 aa).

The protein belongs to the class-II aminoacyl-tRNA synthetase family. In terms of assembly, homodimer.

The protein localises to the cytoplasm. It carries out the reaction tRNA(His) + L-histidine + ATP = L-histidyl-tRNA(His) + AMP + diphosphate + H(+). The protein is Histidine--tRNA ligase of Streptococcus pyogenes serotype M49 (strain NZ131).